A 679-amino-acid polypeptide reads, in one-letter code: Stress-70 protein, mitochondrial (679 aa).

The N-terminal 46 residues, 1 to 46 (MISASRAVAARLVGAAASRGPTAARHQDGWNGLSHEAFRIVSRRDY), are a transit peptide targeting the mitochondrion. The tract at residues 1–432 (MISASRAVAA…IQGGVLAGDV (432 aa)) is interaction with NFS1. Residues Thr63 and Asn64 each contribute to the ADP site. The segment at 63-431 (TNSCVAVMEG…AIQGGVLAGD (369 aa)) is nucleotide-binding domain (NBD). N6-acetyllysine is present on Lys76. Thr87 is subject to Phosphothreonine. An N6-acetyllysine; alternate mark is found at Lys135 and Lys138. N6-succinyllysine; alternate is present on residues Lys135 and Lys138. Lys143 carries the N6-acetyllysine modification. Position 206 is an N6-acetyllysine; alternate (Lys206). Lys206 is subject to N6-succinyllysine; alternate. Lys206 carries the post-translational modification N6-malonyllysine; alternate. 2 positions are modified to N6-acetyllysine: Lys234 and Lys288. An N6-acetyllysine; alternate modification is found at Lys300. Residue Lys300 is modified to N6-succinyllysine; alternate. The ADP site is built by Glu313, Lys316, and Ser320. Lys368 carries the post-translational modification N6-succinyllysine. Positions 388 and 391 each coordinate ADP. Lys394 is subject to N6-succinyllysine. At Ser408 the chain carries Phosphoserine. Positions 432 to 441 (VTDVLLLDVT) are interdomain linker. The segment at 432-679 (VTDVLLLDVT…QKEDQKEEKQ (248 aa)) is interaction with FXN and ISCU. The tract at residues 442–679 (PLSLGIETLG…QKEDQKEEKQ (238 aa)) is substrate-binding domain (SBD). Arg513 bears the Omega-N-methylarginine mark. Residues Lys567 and Lys600 each carry the N6-acetyllysine; alternate modification. N6-succinyllysine; alternate occurs at positions 567 and 600. An N6-succinyllysine modification is found at Lys610. An N6-acetyllysine modification is found at Lys612. Lys646 carries the post-translational modification N6-acetyllysine; alternate. Lys646 carries the post-translational modification N6-succinyllysine; alternate. The segment at 656 to 679 (ASEREGSGSSGTGEQKEDQKEEKQ) is disordered. Residues 669 to 679 (EQKEDQKEEKQ) are compositionally biased toward basic and acidic residues.

The protein belongs to the heat shock protein 70 family. As to quaternary structure, interacts strongly with the intermediate form of FXN and weakly with its mature form. Interacts with HSCB. Associates with the mitochondrial contact site and cristae organizing system (MICOS) complex, composed of at least MICOS10/MIC10, CHCHD3/MIC19, CHCHD6/MIC25, APOOL/MIC27, IMMT/MIC60, APOO/MIC23/MIC26 and QIL1/MIC13. This complex was also known under the names MINOS or MitOS complex. The MICOS complex associates with mitochondrial outer membrane proteins SAMM50, MTX1, MTX2 and DNAJC11, mitochondrial inner membrane protein TMEM11 and with HSPA9. Interacts with DNLZ, the interaction is required to prevent self-aggregation. Interacts with TESPA1. Interacts with PDPN. Interacts with NFU1, NFS1 and ISCU. Interacts with TP53; the interaction promotes TP53 degradation. Interacts (via SBD domain) with UBXN2A; the interaction with UBXN2A inhibits HSPA9/MOT-2 interaction with and degradation of TP53, thereby promotes TP53 translocation to the nucleus. Interacts with ITPR1 AND VDAC1; this interaction couples ITPR1 to VDAC1. Component of the TIM23 mitochondrial inner membrane pre-sequence translocase complex.

It is found in the mitochondrion. The protein resides in the nucleus. Its subcellular location is the nucleolus. It localises to the cytoplasm. The protein localises to the mitochondrion matrix. The enzyme catalyses ATP + H2O = ADP + phosphate + H(+). With respect to regulation, the chaperone activity is regulated by ATP-induced allosteric coupling of the nucleotide-binding (NBD) and substrate-binding (SBD) domains. ATP binding in the nucleotide-binding pocket (NBP) leads to a conformational change in the NBD, which is transferred through the interdomain linker (IDL) to the substrate-binding domain (SBD). This elicits a reduced substrate affinity and a faster substrate exchange rate. Upon hydrolysis of ATP to ADP, the protein undergoes a conformational change that increases its affinity for substrate proteins. It cycles through repeated phases of ATP hydrolysis and nucleotide exchange, facilitating repeated cycles of substrate binding and release. Functions in collaboration with co-chaperones. Functions with the co-chaperone, DNLZ, to maintain solubility and regulate ATP hydrolysis. Nucleotide exchange factors, GRPEL1 and GRPEL2, accelerate nucleotide exchange. Functionally, mitochondrial chaperone that plays a key role in mitochondrial protein import, folding, and assembly. Plays an essential role in the protein quality control system, the correct folding of proteins, the re-folding of misfolded proteins, and the targeting of proteins for subsequent degradation. These processes are achieved through cycles of ATP binding, ATP hydrolysis, and ADP release, mediated by co-chaperones. In mitochondria, it associates with the TIM (translocase of the inner membrane) protein complex to assist in the import and folding of mitochondrial proteins. Plays an important role in mitochondrial iron-sulfur cluster (ISC) biogenesis, interacts with and stabilizes ISC cluster assembly proteins FXN, NFU1, NFS1 and ISCU. Regulates erythropoiesis via stabilization of ISC assembly. Regulates mitochondrial calcium-dependent apoptosis by coupling two calcium channels, ITPR1 and VDAC1, at the mitochondria-associated endoplasmic reticulum (ER) membrane to facilitate calcium transport from the ER lumen to the mitochondria intermembrane space, providing calcium for the downstream calcium channel MCU, which releases it into the mitochondrial matrix. Although primarily located in the mitochondria, it is also found in other cellular compartments. In the cytosol, it associates with proteins involved in signaling, apoptosis, or senescence. It may play a role in cell cycle regulation via its interaction with and promotion of degradation of TP53. May play a role in the control of cell proliferation and cellular aging. Protects against reactive oxygen species (ROS). Extracellular HSPA9 plays a cytoprotective role by preventing cell lysis following immune attack by the membrane attack complex by disrupting formation of the complex. The polypeptide is Stress-70 protein, mitochondrial (Pongo abelii (Sumatran orangutan)).